Reading from the N-terminus, the 190-residue chain is Embryo-specific protein ATS3B (190 aa).

The signal sequence occupies residues 1-24 (MASVRLFFTLISFVFIISTSVYES). Asn37 carries an N-linked (GlcNAc...) asparagine glycan. One can recognise a PLAT domain in the interval 48–158 (CAYTVIISTS…ESVWYGFNYC (111 aa)).

As to quaternary structure, interacts with EULS3 (via N-terminus). In terms of tissue distribution, expressed in roots, rosette leaves, stems, cauline leaves and flowers.

It localises to the secreted. Functionally, may play a role during embryo development. This Arabidopsis thaliana (Mouse-ear cress) protein is Embryo-specific protein ATS3B.